The sequence spans 323 residues: NADH-ubiquinone oxidoreductase chain 1 (323 aa).

8 helical membrane passes run 9–29 (ILNP…LTLI), 76–96 (LFVL…PMPM), 107–127 (ILFV…SGWA), 145–165 (ISYE…SGGF), 175–195 (EATW…ISTL), 227–247 (LFFL…AVLF), 258–278 (EFTS…FLWV), and 298–318 (FLPL…ACAG).

The protein belongs to the complex I subunit 1 family.

The protein resides in the mitochondrion inner membrane. The enzyme catalyses a ubiquinone + NADH + 5 H(+)(in) = a ubiquinol + NAD(+) + 4 H(+)(out). In terms of biological role, core subunit of the mitochondrial membrane respiratory chain NADH dehydrogenase (Complex I) that is believed to belong to the minimal assembly required for catalysis. Complex I functions in the transfer of electrons from NADH to the respiratory chain. The immediate electron acceptor for the enzyme is believed to be ubiquinone. The sequence is that of NADH-ubiquinone oxidoreductase chain 1 (MT-ND1) from Gadus morhua (Atlantic cod).